A 148-amino-acid chain; its full sequence is SPbeta prophage-derived disulfide bond formation protein B (148 aa).

The chain crosses the membrane as a helical span at residues 7-26 (KSFFLLLFFLSFFGTMASLF). A disulfide bond links cysteine 36 and cysteine 39. 2 helical membrane passes run 41 to 60 (YQRIFLYPIPIILLIGLLKK) and 67 to 84 (YVVFLSSIGLIIAFYHYI). Cysteine 95 and cysteine 102 are disulfide-bonded. Residues 111–135 (GFITLPLMSSVCFALIFGIGLKLII) form a helical membrane-spanning segment.

Belongs to the DsbB family. BdbC subfamily.

It is found in the cell membrane. Functionally, important but not absolutely essential for the production of the lantibiotic sublancin 168, it may also be required for the stability of other secreted proteins. Not required for competence for DNA uptake. This chain is SPbeta prophage-derived disulfide bond formation protein B (bdbB), found in Bacillus subtilis (strain 168).